Here is a 337-residue protein sequence, read N- to C-terminus: MTQPLVGKQILIVEDEQVFRSLLDSWFSSLGATTVLAADGVDALELLGGFTPDLMICDIAMPRMNGLKLLEHIRNRGDQTPVLVISATENMADIAKALRLGVEDVLLKPVKDLNRLREMVFACLYPSMFNSRVEEEERLFRDWDAMVDNPAAAAKLLQELQPPVQQVISHCRVNYRQLVAADKPGLVLDIAALSENDLAFYCLDVTRAGHNGVLAALLLRALFNGLLQEQLAHQNQRLPELGALLKQVNHLLRQANLPGQFPLLVGYYHRELKNLILVSAGLNATLNTGEHQVQISNGVPLGTLGNAYLNQLSQRCDAWQCQIWGTGGRLRLMLSAE.

In terms of domain architecture, Response regulatory spans 9-123; the sequence is QILIVEDEQV…NRLREMVFAC (115 aa). D58 is subject to 4-aspartylphosphate.

This sequence belongs to the RssB family. Binds to RpoS. In terms of processing, phosphorylated. Phosphorylation stimulates the interaction with RpoS and, therefore, the proteolysis of RpoS.

Functionally, regulates the turnover of the sigma S factor (RpoS) by promoting its proteolysis in exponentially growing cells. Acts by binding and delivering RpoS to the ClpXP protease. RssB is not co-degraded with RpoS, but is released from the complex and can initiate a new cycle of RpoS recognition and degradation. In Shigella flexneri, this protein is Regulator of RpoS.